A 173-amino-acid polypeptide reads, in one-letter code: Phosphopantetheine adenylyltransferase (173 aa).

Threonine 9 serves as a coordination point for substrate. Residues threonine 9–phenylalanine 10 and histidine 17 contribute to the ATP site. Residues lysine 41, threonine 75, and arginine 89 each contribute to the substrate site. Residues glycine 90–arginine 92, glutamate 100, and histidine 125–serine 131 contribute to the ATP site.

It belongs to the bacterial CoaD family. As to quaternary structure, homohexamer. Mg(2+) is required as a cofactor.

The protein resides in the cytoplasm. The enzyme catalyses (R)-4'-phosphopantetheine + ATP + H(+) = 3'-dephospho-CoA + diphosphate. It participates in cofactor biosynthesis; coenzyme A biosynthesis; CoA from (R)-pantothenate: step 4/5. Functionally, reversibly transfers an adenylyl group from ATP to 4'-phosphopantetheine, yielding dephospho-CoA (dPCoA) and pyrophosphate. The chain is Phosphopantetheine adenylyltransferase from Methylacidiphilum infernorum (isolate V4) (Methylokorus infernorum (strain V4)).